Reading from the N-terminus, the 376-residue chain is Putative F-box only protein 9 (376 aa).

In terms of domain architecture, F-box spans 1–44 (MSDLPPDLVEDILSRVPATSLKRLRFTCKQWNSLFKNRRFTEKH).

This is Putative F-box only protein 9 (FBX9) from Arabidopsis thaliana (Mouse-ear cress).